A 189-amino-acid chain; its full sequence is Thermostable direct hemolysin (189 aa).

The N-terminal stretch at 1-24 (MKYQYFAKKSFLFISMLAAFKTFA) is a signal peptide. A disulfide bond links Cys-175 and Cys-185.

Belongs to the TDH hemolysin family. As to quaternary structure, homodimer.

Functionally, bacterial hemolysins are exotoxins that attack blood cell membranes and cause cell rupture by mechanisms not clearly defined. The protein is Thermostable direct hemolysin (tdh) of Vibrio mimicus.